A 304-amino-acid chain; its full sequence is Thymidylate synthase (304 aa).

Residues R30 and 157–158 (RR) contribute to the dUMP site. The Nucleophile role is filled by C177. DUMP-binding positions include 206–209 (RSCD), N217, and 247–249 (HVY). Residue D209 participates in (6R)-5,10-methylene-5,6,7,8-tetrahydrofolate binding.

This sequence belongs to the thymidylate synthase family. In terms of assembly, homodimer.

The protein localises to the nucleus. It carries out the reaction dUMP + (6R)-5,10-methylene-5,6,7,8-tetrahydrofolate = 7,8-dihydrofolate + dTMP. It functions in the pathway pyrimidine metabolism; dTTP biosynthesis. With respect to regulation, inhibited by 5-fluoro-2'-deoxyuridine 5'-monophosphate (FdUMP). Thymidylate synthase required for de novo biosynthesis of pyrimidine deoxyribonucleotides. Required for both nuclear and mitochondrial DNA synthesis. The sequence is that of Thymidylate synthase (CDC21) from Saccharomyces cerevisiae (strain ATCC 204508 / S288c) (Baker's yeast).